The chain runs to 419 residues: MDYLEIKGGKKLFGSVYISGAKNAALPLIAMSILAKNDVVIRNIPQVADIKTLIKLLQNLGAVSKFENLDLVINTTTINSTKATYDIVRKMRASILVLGPLLARFGHCEVSLPGGCAIGARPIDLHLSALEKMGANIEIKDGYVIARAKDGLKGANIIFDKITVTGTENIVMAAALARGTTKILNAAKEPEVVQVCQILNDSGIKIEGIGTNELTIYGGGGELLNLNKICVIPDRIEAGTYLCAAAIAGGEITLKQVEPNHLVSVLGKLSDMGVNFELGDKSIKVISDAKLSPVQIITTEFPGFPTDMQAQFMALACVANGVSTIDERLFENRFMHASELNRMGADIKLNGHIATVSGVSLNGADVMATDLRASSALVLAALVANGTTRVHRIYHLDRGYENLEIKLQSLGADIKRLSE.

22-23 (KN) contributes to the phosphoenolpyruvate binding site. Arginine 92 contributes to the UDP-N-acetyl-alpha-D-glucosamine binding site. The active-site Proton donor is the cysteine 116. Position 116 is a 2-(S-cysteinyl)pyruvic acid O-phosphothioketal (cysteine 116). UDP-N-acetyl-alpha-D-glucosamine is bound by residues 121–125 (RPIDL), aspartate 307, and leucine 329.

This sequence belongs to the EPSP synthase family. MurA subfamily.

The protein localises to the cytoplasm. The catalysed reaction is phosphoenolpyruvate + UDP-N-acetyl-alpha-D-glucosamine = UDP-N-acetyl-3-O-(1-carboxyvinyl)-alpha-D-glucosamine + phosphate. Its pathway is cell wall biogenesis; peptidoglycan biosynthesis. Cell wall formation. Adds enolpyruvyl to UDP-N-acetylglucosamine. The protein is UDP-N-acetylglucosamine 1-carboxyvinyltransferase of Campylobacter fetus subsp. fetus (strain 82-40).